The primary structure comprises 416 residues: Pentraxin fusion protein (416 aa).

The signal sequence occupies residues 1–14; it reads MKSLLLFLKSQVFG. Residue N129 is glycosylated (N-linked (GlcNAc...) asparagine). The interval 184 to 206 is disordered; the sequence is GTEASDSSESVDGTEAPASPESD. The region spanning 220-416 is the Pentraxin (PTX) domain; the sequence is TNKSFMFPKE…YSMIGNVAEV (197 aa). An N-linked (GlcNAc...) asparagine glycan is attached at N221. Residues C251 and C311 are joined by a disulfide bond. Positions 275, 353, 354, and 364 each coordinate Ca(2+).

It depends on Ca(2+) as a cofactor.

The protein is Pentraxin fusion protein (pxn1) of Xenopus laevis (African clawed frog).